A 527-amino-acid polypeptide reads, in one-letter code: Zinc finger CCCH-type with G patch domain-containing protein (527 aa).

Positions 97–126 (GEVSGSSSDMREREDEREEEDDGEVEGEVD) are disordered. Acidic residues predominate over residues 111–125 (DEREEEDDGEVEGEV). Residues 173–200 (QKSMKPCPFFLEDKCRFADNCRFSHGEV) form a C3H1-type zinc finger. A disordered region spans residues 268–312 (LREDDLPSCSDSEDDDNGEGEAAFPRVLTQEEDWAPSRSSSAFGG). A G-patch domain is found at 317–363 (TRGIGSKLMLKMGYEYGKGLGKTSEGRVEPVLAVVLPKGKSLDQCAE). Disordered stretches follow at residues 369–396 (TQRK…AHNT), 410–444 (LGNG…YKGG), and 505–527 (KAQE…MTEF). Basic residues predominate over residues 384 to 393 (RNKRTRKARA). The span at 511-527 (AQRENRKADTHKKMTEF) shows a compositional bias: basic and acidic residues.

Its subcellular location is the nucleus. Its function is as follows. Transcription repressor that specifically binds the 5'-GGAG[GA]A[GA]A-3' consensus sequence. Represses transcription by recruiting the chromatin multiprotein complex NuRD to target promoters. Negatively regulates expression of EGFR, a gene involved in cell proliferation, survival and migration. This chain is Zinc finger CCCH-type with G patch domain-containing protein (zgpat), found in Salmo salar (Atlantic salmon).